The following is a 494-amino-acid chain: Folate-biopterin transporter (494 aa).

Transmembrane regions (helical) follow at residues A31–L51, L64–L84, S104–V124, V133–V153, L170–L190, T197–S217, I246–F266, V284–L303, V310–I330, L346–L366, I375–F395, and L415–L435. The tract at residues P441–V461 is disordered.

This sequence belongs to the major facilitator superfamily. Folate-biopterin transporter (TC 2.A.71) family.

It localises to the cell membrane. In terms of biological role, mediates folate monoglutamate transport involved in tetrahydrofolate biosynthesis. It also mediates transport of antifolates, such as methotrexate and aminopterin. In Synechocystis sp. (strain ATCC 27184 / PCC 6803 / Kazusa), this protein is Folate-biopterin transporter.